A 325-amino-acid chain; its full sequence is Pyruvate dehydrogenase E1 component subunit beta (325 aa).

Glu-60 is a thiamine diphosphate binding site.

Heterodimer of an alpha and a beta chain. Requires thiamine diphosphate as cofactor.

The catalysed reaction is N(6)-[(R)-lipoyl]-L-lysyl-[protein] + pyruvate + H(+) = N(6)-[(R)-S(8)-acetyldihydrolipoyl]-L-lysyl-[protein] + CO2. Its function is as follows. The pyruvate dehydrogenase complex catalyzes the overall conversion of pyruvate to acetyl-CoA and CO(2). It contains multiple copies of three enzymatic components: pyruvate dehydrogenase (E1), dihydrolipoamide acetyltransferase (E2) and lipoamide dehydrogenase (E3). This is Pyruvate dehydrogenase E1 component subunit beta (pdhB) from Staphylococcus aureus (strain Mu50 / ATCC 700699).